Consider the following 215-residue polypeptide: Chaperone protein TorD (215 aa).

It belongs to the TorD/DmsD family. TorD subfamily.

The protein resides in the cytoplasm. Its function is as follows. Involved in the biogenesis of TorA. Acts on TorA before the insertion of the molybdenum cofactor and, as a result, probably favors a conformation of the apoenzyme that is competent for acquiring the cofactor. The sequence is that of Chaperone protein TorD from Aliivibrio salmonicida (strain LFI1238) (Vibrio salmonicida (strain LFI1238)).